The following is a 96-amino-acid chain: Co-chaperonin GroES (96 aa).

The protein belongs to the GroES chaperonin family. Heptamer of 7 subunits arranged in a ring. Interacts with the chaperonin GroEL.

The protein resides in the cytoplasm. Its function is as follows. Together with the chaperonin GroEL, plays an essential role in assisting protein folding. The GroEL-GroES system forms a nano-cage that allows encapsulation of the non-native substrate proteins and provides a physical environment optimized to promote and accelerate protein folding. GroES binds to the apical surface of the GroEL ring, thereby capping the opening of the GroEL channel. This Aromatoleum aromaticum (strain DSM 19018 / LMG 30748 / EbN1) (Azoarcus sp. (strain EbN1)) protein is Co-chaperonin GroES.